We begin with the raw amino-acid sequence, 404 residues long: MILPPRGTKDFTPELAILWKEIVSKIESVYQKYGFDPIITPIVEYWDTLKGKYGEEAEKKEIWRFRVPQSKKWYALKYDQTVPLARYFARFRPKLPFKRYTIDRTFRYDEPQKGRYREFWQADADIVGSPYPEADAEILNMMIEAYETLGFNVYLRVSDRRALESLIEKVGEKDKFIEIARIIDKWDKIGEEGVLEKLKQITDKAEKIIELLKENPEEFYPKEFWEIIDLVEKKNKIKIDIKLARGFDYYTGMVYEVWIEGFNRALGGGGRYDNLIGIFSKEKIPAVGGSIGINPLIDVGLEKGIFNLNKKTYTQIAVIYIEVFKEAWRIANKLRDLGLNVYIDLLRRDFKKQMEYVIEKDIRYLVIVGKKDLANNLVTFQDRLTRERKKIPIENLEEIKSLVQ.

It belongs to the class-II aminoacyl-tRNA synthetase family.

It is found in the cytoplasm. It catalyses the reaction tRNA(His) + L-histidine + ATP = L-histidyl-tRNA(His) + AMP + diphosphate + H(+). In Nanoarchaeum equitans (strain Kin4-M), this protein is Histidine--tRNA ligase.